Here is a 356-residue protein sequence, read N- to C-terminus: Putative transposase y4zB (356 aa).

Residues 1 to 19 (MITTGTPTTRRSAAGTAGA) show a composition bias toward low complexity. 2 disordered regions span residues 1–54 (MITT…PLAD) and 334–356 (PPPV…FAYV).

This sequence belongs to the transposase 11 family.

The sequence is that of Putative transposase y4zB from Sinorhizobium fredii (strain NBRC 101917 / NGR234).